Consider the following 402-residue polypeptide: 1-deoxy-D-xylulose 5-phosphate reductoisomerase (402 aa).

Residues Thr13, Gly14, Ser15, Ile16, and Asn126 each contribute to the NADPH site. Lys127 is a 1-deoxy-D-xylulose 5-phosphate binding site. Glu128 serves as a coordination point for NADPH. Residue Asp152 coordinates Mn(2+). 4 residues coordinate 1-deoxy-D-xylulose 5-phosphate: Ser153, Glu154, Ser188, and His211. Glu154 contributes to the Mn(2+) binding site. NADPH is bound at residue Gly217. Residues Ser224, Asn229, Lys230, and Glu233 each coordinate 1-deoxy-D-xylulose 5-phosphate. Glu233 is a binding site for Mn(2+).

Belongs to the DXR family. Mg(2+) is required as a cofactor. Requires Mn(2+) as cofactor.

It catalyses the reaction 2-C-methyl-D-erythritol 4-phosphate + NADP(+) = 1-deoxy-D-xylulose 5-phosphate + NADPH + H(+). It functions in the pathway isoprenoid biosynthesis; isopentenyl diphosphate biosynthesis via DXP pathway; isopentenyl diphosphate from 1-deoxy-D-xylulose 5-phosphate: step 1/6. Catalyzes the NADPH-dependent rearrangement and reduction of 1-deoxy-D-xylulose-5-phosphate (DXP) to 2-C-methyl-D-erythritol 4-phosphate (MEP). The sequence is that of 1-deoxy-D-xylulose 5-phosphate reductoisomerase from Psychrobacter cryohalolentis (strain ATCC BAA-1226 / DSM 17306 / VKM B-2378 / K5).